The sequence spans 140 residues: L-fucose mutarotase (140 aa).

The active-site Proton donor is histidine 22. Substrate is bound by residues aspartate 30, arginine 107, and 129–131 (YGN).

It belongs to the RbsD / FucU family. FucU mutarotase subfamily. As to quaternary structure, homodecamer.

The protein localises to the cytoplasm. The enzyme catalyses alpha-L-fucose = beta-L-fucose. It functions in the pathway carbohydrate metabolism; L-fucose metabolism. Involved in the anomeric conversion of L-fucose. This chain is L-fucose mutarotase, found in Klebsiella pneumoniae subsp. pneumoniae (strain ATCC 700721 / MGH 78578).